A 466-amino-acid chain; its full sequence is Fumarate hydratase class II (466 aa).

Residues 99 to 101, 129 to 132, 139 to 141, and Thr187 each bind substrate; these read SGT, HPND, and SSN. His188 (proton donor/acceptor) is an active-site residue. Residue Ser318 is part of the active site. Substrate contacts are provided by residues Ser319 and 324 to 326; that span reads KVN.

The protein belongs to the class-II fumarase/aspartase family. Fumarase subfamily. Homotetramer.

It is found in the cytoplasm. The catalysed reaction is (S)-malate = fumarate + H2O. It functions in the pathway carbohydrate metabolism; tricarboxylic acid cycle; (S)-malate from fumarate: step 1/1. Involved in the TCA cycle. Catalyzes the stereospecific interconversion of fumarate to L-malate. This Thermus aquaticus protein is Fumarate hydratase class II.